Reading from the N-terminus, the 127-residue chain is Large ribosomal subunit protein bL20 (127 aa).

The protein belongs to the bacterial ribosomal protein bL20 family.

In terms of biological role, binds directly to 23S ribosomal RNA and is necessary for the in vitro assembly process of the 50S ribosomal subunit. It is not involved in the protein synthesizing functions of that subunit. This is Large ribosomal subunit protein bL20 from Bifidobacterium longum (strain NCC 2705).